The sequence spans 338 residues: MSETKSKVLVLGGLGYIGSCFIDQLLKQYPDVTVSVIDINHTSLALQLLPRQVNVHFVNLLDRAQLTDTIAQINPDVVFHFAAKTSVKESTEQPLTYFDHNLVGTLNLLHALKELQKPIQLFFSSTAAVFGSASTLPIPENLVLEETLASNPYGISKFLSEIVLQTLTRSPHFQVIALRYFNVAGASNPFGNFNKNTTLLIPNLIKAFMEKRTFFLYGDDYDTKDGSCIRDYIHVVDLCDAHLLAWKWLQANPKVRFESFNLGSGQGFSNWEVINTAQAIFAPEQLQLKIESRRAGDPPVLVVDCTKAKRLLNFQPTRSLHKMLSDETIFYRDFYNRL.

NAD(+) is bound by residues 16 to 17 (YI), 37 to 42 (IDINHT), 59 to 60 (NL), 81 to 85 (FAAKT), threonine 126, tyrosine 153, lysine 157, and phenylalanine 181. 2 residues coordinate substrate: threonine 126 and tyrosine 153. Tyrosine 153 functions as the Proton acceptor in the catalytic mechanism. Residues asparagine 182, 198–199 (TL), 215–217 (FLY), arginine 230, and 294–297 (RAGD) contribute to the substrate site.

It belongs to the NAD(P)-dependent epimerase/dehydratase family. Homodimer. The cofactor is NAD(+).

It carries out the reaction UDP-alpha-D-glucose = UDP-alpha-D-galactose. Its pathway is carbohydrate metabolism; galactose metabolism. Functionally, involved in the metabolism of galactose. Catalyzes the conversion of UDP-galactose (UDP-Gal) to UDP-glucose (UDP-Glc) through a mechanism involving the transient reduction of NAD. This chain is UDP-glucose 4-epimerase (galE), found in Mycoplasma pneumoniae (strain ATCC 29342 / M129 / Subtype 1) (Mycoplasmoides pneumoniae).